Reading from the N-terminus, the 53-residue chain is ATP synthase protein 8 (53 aa).

Residues 4-24 form a helical membrane-spanning segment; it reads MAPISWLLLFIVFSITFILFC.

It belongs to the ATPase protein 8 family. As to quaternary structure, F-type ATPases have 2 components, CF(1) - the catalytic core - and CF(0) - the membrane proton channel.

The protein resides in the mitochondrion membrane. Its function is as follows. Mitochondrial membrane ATP synthase (F(1)F(0) ATP synthase or Complex V) produces ATP from ADP in the presence of a proton gradient across the membrane which is generated by electron transport complexes of the respiratory chain. F-type ATPases consist of two structural domains, F(1) - containing the extramembraneous catalytic core and F(0) - containing the membrane proton channel, linked together by a central stalk and a peripheral stalk. During catalysis, ATP synthesis in the catalytic domain of F(1) is coupled via a rotary mechanism of the central stalk subunits to proton translocation. Part of the complex F(0) domain. Minor subunit located with subunit a in the membrane. In Drosophila yakuba (Fruit fly), this protein is ATP synthase protein 8 (mt:ATPase8).